Reading from the N-terminus, the 414-residue chain is 5-aminolevulinate synthase (414 aa).

The substrate site is built by Arg-22, Ser-133, and Lys-152. Pyridoxal 5'-phosphate-binding residues include Ser-185, His-213, and Thr-241. Residue Lys-244 is part of the active site. Residue Lys-244 is modified to N6-(pyridoxal phosphate)lysine. Residues Thr-273 and Thr-274 each coordinate pyridoxal 5'-phosphate. Thr-359 serves as a coordination point for substrate.

Belongs to the class-II pyridoxal-phosphate-dependent aminotransferase family. Homodimer. Pyridoxal 5'-phosphate serves as cofactor.

The catalysed reaction is succinyl-CoA + glycine + H(+) = 5-aminolevulinate + CO2 + CoA. It functions in the pathway porphyrin-containing compound metabolism; protoporphyrin-IX biosynthesis; 5-aminolevulinate from glycine: step 1/1. In Rickettsia felis (strain ATCC VR-1525 / URRWXCal2) (Rickettsia azadi), this protein is 5-aminolevulinate synthase (hemA).